The chain runs to 1093 residues: Probable phosphorylase b kinase regulatory subunit beta (1093 aa).

Positions 1–27 are disordered; it reads MRDVPKSLGLSVTTPGGSSGAPDSGRH. Calmodulin-binding stretches follow at residues 6–27, 751–778, and 905–936; these read KSLGLSVTTPGGSSGAPDSGRH, QLYHRAGSLRYWRAVRYCSSLLHHIVDS, and EKLTTLQRRQLEGCLCRVPKHFYNKIWEILQR. Residue C1090 is the site of S-farnesyl cysteine attachment.

Belongs to the phosphorylase b kinase regulatory chain family. Although the final Cys may be farnesylated, the terminal tripeptide is probably not removed, and the C-terminus is not methylated.

It is found in the cell membrane. The protein operates within glycan biosynthesis; glycogen metabolism. Functionally, phosphorylase b kinase catalyzes the phosphorylation of serine in certain substrates, including troponin I. The beta chain acts as a regulatory unit and modulates the activity of the holoenzyme in response to phosphorylation. In Drosophila melanogaster (Fruit fly), this protein is Probable phosphorylase b kinase regulatory subunit beta.